The chain runs to 487 residues: Diacylglycerol kinase 4 (487 aa).

Residues 86-242 enclose the DAGKc domain; it reads TPEVPLMVFV…LDSWNILITM (157 aa).

Belongs to the eukaryotic diacylglycerol kinase family. As to quaternary structure, monomer. As to expression, highly expressed in pollen grains. Expressed in roots, hypocotyls, leaf vasculature, developing anthers and stigmas, and receptacles of siliques.

It localises to the endoplasmic reticulum. It is found in the cytoplasm. The protein resides in the cytosol. The enzyme catalyses a 1,2-diacyl-sn-glycerol + ATP = a 1,2-diacyl-sn-glycero-3-phosphate + ADP + H(+). Phosphorylates the second messenger diacylglycerol (DAG) to generate phosphatidic acid (PA), another important signaling molecule. PA is required for plant development and responses to abiotic stress and pathogen attack. May be involved in the accumulation of PA during cold stress. Involved in the regulation of PA and phosphatidylcholine biosynthesis in growing pollen tubes. Required for nitric oxide-dependent pollen tube growth and re-orientation responses. Functions together with DGK2 in male gametophyte development and biosynthesis of phosphatidylglycerol and phosphatidylinositol in the endoplasmic reticulum (ER). Involved in PA production for pollen grain growth, as well as leaf and root growth. Possesses guanylyl cyclase activity in vitro. This is Diacylglycerol kinase 4 from Arabidopsis thaliana (Mouse-ear cress).